We begin with the raw amino-acid sequence, 125 residues long: Cu-Zn superoxide dismutase-like protein OPG175 (125 aa).

An intrachain disulfide couples C52 to C102.

The protein belongs to the Cu-Zn superoxide dismutase family.

The protein localises to the virion. Its subcellular location is the host cytoplasm. In terms of biological role, superoxide dismutase-like protein with no enzymatic activity. The sequence is that of Cu-Zn superoxide dismutase-like protein OPG175 (OPG175) from Monkeypox virus.